A 394-amino-acid chain; its full sequence is Elongation factor Tu (394 aa).

The 195-residue stretch at 10-204 folds into the tr-type G domain; the sequence is KPHINIGTIG…AVDDNIPTPE (195 aa). The tract at residues 19–26 is G1; it reads GHVDHGKT. Residue 19 to 26 coordinates GTP; sequence GHVDHGKT. Residue Thr-26 participates in Mg(2+) binding. The tract at residues 60–64 is G2; sequence GITIN. The segment at 81 to 84 is G3; that stretch reads DCPG. GTP is bound by residues 81-85 and 136-139; these read DCPGH and NKID. Residues 136 to 139 are G4; it reads NKID. The G5 stretch occupies residues 174 to 176; it reads SAL.

It belongs to the TRAFAC class translation factor GTPase superfamily. Classic translation factor GTPase family. EF-Tu/EF-1A subfamily. Monomer.

Its subcellular location is the cytoplasm. The enzyme catalyses GTP + H2O = GDP + phosphate + H(+). GTP hydrolase that promotes the GTP-dependent binding of aminoacyl-tRNA to the A-site of ribosomes during protein biosynthesis. In Chlamydia felis (strain Fe/C-56) (Chlamydophila felis), this protein is Elongation factor Tu.